We begin with the raw amino-acid sequence, 282 residues long: Transcription repressor MYB4 (282 aa).

HTH myb-type domains follow at residues 9–61 and 62–116; these read KAHT…INYL and RPDL…RRKL. DNA-binding regions (H-T-H motif) lie at residues 37-61 and 89-112; these read WRSL…INYL and WSLI…NTHI. Residues 119-145 form a disordered region; sequence RGIDPTSHRPIQESSASQDSKPTQLEP. Polar residues predominate over residues 130–145; that stretch reads QESSASQDSKPTQLEP.

In terms of assembly, interacts with BHLH12/MYC1 and BHLH42/TT8. Interacts with SAD2. In terms of tissue distribution, widely expressed at low level. Highly expressed in siliques. Weakly expressed in seedlings, young and mature leaves, cauline leaves, stems, flower buds and roots.

It is found in the nucleus. In terms of biological role, transcription repressor involved in regulation of protection against UV. Mediates transcriptional repression of CYP73A5, the gene encoding trans-cinnamate 4-monooxygenase, thereby regulating the accumulation of the UV-protectant compound sinapoylmalate. The protein is Transcription repressor MYB4 (MYB4) of Arabidopsis thaliana (Mouse-ear cress).